The chain runs to 553 residues: Urocanate hydratase (553 aa).

NAD(+) contacts are provided by residues 45–46 (GG), glutamine 123, 169–171 (GMG), aspartate 189, arginine 194, 235–236 (NA), 256–260 (QTSAH), 266–267 (YV), tyrosine 315, and glycine 485.

It belongs to the urocanase family. NAD(+) serves as cofactor.

It is found in the cytoplasm. The catalysed reaction is 4-imidazolone-5-propanoate = trans-urocanate + H2O. The protein operates within amino-acid degradation; L-histidine degradation into L-glutamate; N-formimidoyl-L-glutamate from L-histidine: step 2/3. Functionally, catalyzes the conversion of urocanate to 4-imidazolone-5-propionate. The protein is Urocanate hydratase of Staphylococcus aureus (strain MRSA252).